The chain runs to 257 residues: Uxu operon transcriptional regulator (257 aa).

The HTH gntR-type domain occupies 8–76; that stretch reads QRPYQEVGAM…RGAGIYVLDN (69 aa). Positions 36–55 form a DNA-binding region, H-T-H motif; the sequence is EREIAEMLDVTRTVVREALI.

Repressor for the uxuRBA operon. The chain is Uxu operon transcriptional regulator (uxuR) from Escherichia coli (strain K12).